Consider the following 296-residue polypeptide: UBX domain-containing protein 1-A (296 aa).

The UBA domain maps to 1-42 (MAECSTLESLIEMGFSSTRAEKALTATGNQGIEPAMDWLVEH). Residues 43-216 (EDDPDIDEPS…VQEPPTKKEY (174 aa)) form a disordered region. Over residues 61–75 (TDTADTTDTTDTTDT) the composition is skewed to low complexity. Composition is skewed to basic and acidic residues over residues 86–100 (PLTE…KRMM), 107–123 (QNER…EQEK), and 138–178 (KMQE…DRAR). A coiled-coil region spans residues 87–177 (LTEEEKEKQT…KIARDKADRA (91 aa)). The span at 191 to 206 (PAETSIPATTPSPSSP) shows a compositional bias: low complexity. The 80-residue stretch at 214–293 (KEYDQCRIQV…GLVPTAVLIV (80 aa)) folds into the UBX domain.

Its subcellular location is the cytoplasm. Its function is as follows. Component of a complex required to couple deglycosylation and proteasome-mediated degradation of misfolded proteins in the endoplasmic reticulum that are retrotranslocated in the cytosol. Involved in ubiquitin-proteasome systems. This Xenopus laevis (African clawed frog) protein is UBX domain-containing protein 1-A (ubxn1-a).